A 244-amino-acid polypeptide reads, in one-letter code: Tetraspanin-7 (244 aa).

Residues 1 to 11 (METKPVITCLK) lie on the Cytoplasmic side of the membrane. The chain crosses the membrane as a helical span at residues 12–35 (TLLIIYSFVFWITGVILLAVGVWG). Residues 36 to 51 (KLTLGTYISLIAENST) are Extracellular-facing. Asn-49 carries N-linked (GlcNAc...) asparagine glycosylation. A helical membrane pass occupies residues 52-70 (NAPYVLIGTGTTIVVFGLF). Over 71–81 (GCFATCRGSPW) the chain is Cytoplasmic. The chain crosses the membrane as a helical span at residues 82–107 (MLKLYAMFLSLVFLAELVAGISGFVF). The Extracellular segment spans residues 108-208 (RHEIKDTFLR…LVTSFMETNM (101 aa)). Asn-150, Asn-153, Asn-172, and Asn-183 each carry an N-linked (GlcNAc...) asparagine glycan. The chain crosses the membrane as a helical span at residues 209-229 (GIIAGVAFGIAFSQLIGMLLA). The Cytoplasmic segment spans residues 230–244 (CCLSRFITANQYEMV).

Belongs to the tetraspanin (TM4SF) family.

The protein localises to the membrane. In terms of biological role, may be involved in cell proliferation and cell motility. This is Tetraspanin-7 (TSPAN7) from Pan troglodytes (Chimpanzee).